Reading from the N-terminus, the 142-residue chain is Gonadotropin subunit beta-2 (142 aa).

The first 24 residues, 1 to 24 (MLGLHVGTLMISLFLCILLEPVEG), serve as a signal peptide directing secretion. Cystine bridges form between cysteine 30–cysteine 78, cysteine 44–cysteine 93, cysteine 47–cysteine 131, cysteine 55–cysteine 109, cysteine 59–cysteine 111, and cysteine 114–cysteine 121. An N-linked (GlcNAc...) asparagine glycan is attached at asparagine 34.

Belongs to the glycoprotein hormones subunit beta family. As to quaternary structure, heterodimer of an alpha and a beta chain.

It localises to the secreted. Its function is as follows. Involved in gametogenesis and steroidogenesis. The polypeptide is Gonadotropin subunit beta-2 (cgbb) (Coregonus autumnalis (Arctic cisco)).